The sequence spans 126 residues: Aspartate 1-decarboxylase (126 aa).

The active-site Schiff-base intermediate with substrate; via pyruvic acid is the Ser25. Residue Ser25 is modified to Pyruvic acid (Ser). Position 57 (Thr57) interacts with substrate. Catalysis depends on Tyr58, which acts as the Proton donor. 73-75 (GAA) contributes to the substrate binding site.

The protein belongs to the PanD family. Heterooctamer of four alpha and four beta subunits. Pyruvate is required as a cofactor. Is synthesized initially as an inactive proenzyme, which is activated by self-cleavage at a specific serine bond to produce a beta-subunit with a hydroxyl group at its C-terminus and an alpha-subunit with a pyruvoyl group at its N-terminus.

It is found in the cytoplasm. The catalysed reaction is L-aspartate + H(+) = beta-alanine + CO2. The protein operates within cofactor biosynthesis; (R)-pantothenate biosynthesis; beta-alanine from L-aspartate: step 1/1. In terms of biological role, catalyzes the pyruvoyl-dependent decarboxylation of aspartate to produce beta-alanine. This chain is Aspartate 1-decarboxylase, found in Citrobacter koseri (strain ATCC BAA-895 / CDC 4225-83 / SGSC4696).